Here is a 153-residue protein sequence, read N- to C-terminus: Cystatin-9 (153 aa).

The first 27 residues, 1-27 (MGRQRRCRWAQPWTLLLLLLGPRLLVT), serve as a signal peptide directing secretion.

It belongs to the cystatin family.

Its subcellular location is the secreted. Functionally, may play a role in hematopoietic differentiation or inflammation. This chain is Cystatin-9 (CST9), found in Bos taurus (Bovine).